Reading from the N-terminus, the 88-residue chain is Large ribosomal subunit protein bL27 (88 aa).

Polar residues predominate over residues 1-13; sequence MATKKGASSSSNG. Positions 1 to 23 are disordered; that stretch reads MATKKGASSSSNGRDSEAKRLGV.

The protein belongs to the bacterial ribosomal protein bL27 family.

This is Large ribosomal subunit protein bL27 from Corynebacterium urealyticum (strain ATCC 43042 / DSM 7109).